The chain runs to 274 residues: MNKTAIALLALLASSASLAATPWQKITQPVPGSAQSIGSFSNGCIVGADTLPIQSEHYQVMRTDQRRYFGHPDLVMFIQRLSSQVSNLGMGTVLIGDMGMPAGGRFNGGHASHQTGLDVDIFLQLPKTRWTSAQLLRPQALDLVSRDGKHVVSTLWKPEIFSLIKLAAQDKDVTRIFVNPAIKQQLCLDAGTDRDWLRKVRPWFQHRAHMHVRLRCPADSLECEDQPLPPPGDGCGAELQSWFEPPKPGTTKPEKKTPPPLPPSCQALLDEHVI.

The signal sequence occupies residues 1–19; it reads MNKTAIALLALLASSASLA. 3 disulfide bridges follow: Cys-44/Cys-265, Cys-187/Cys-235, and Cys-216/Cys-223. Zn(2+) contacts are provided by His-110, His-113, Asp-120, Asp-147, His-150, and His-211. The interval 227-274 is disordered; it reads PLPPPGDGCGAELQSWFEPPKPGTTKPEKKTPPPLPPSCQALLDEHVI.

The protein belongs to the peptidase M74 family. Dimer. The cofactor is Zn(2+).

Its subcellular location is the periplasm. Functionally, murein endopeptidase that cleaves the D-alanyl-meso-2,6-diamino-pimelyl amide bond that connects peptidoglycan strands. Likely plays a role in the removal of murein from the sacculus. This chain is Penicillin-insensitive murein endopeptidase, found in Escherichia coli (strain ATCC 8739 / DSM 1576 / NBRC 3972 / NCIMB 8545 / WDCM 00012 / Crooks).